The following is a 197-amino-acid chain: Short chain dehydrogenase ausX (197 aa).

NADP(+)-binding residues include Ile-49, Asp-95, Arg-157, and Tyr-189. The active-site Proton acceptor is Tyr-189. Tyr-189 (proton donor) is an active-site residue.

The protein belongs to the short-chain dehydrogenases/reductases (SDR) family.

It participates in secondary metabolite biosynthesis; terpenoid biosynthesis. Its function is as follows. Short chain dehydrogenase; part of the gene cluster A that mediates the biosynthesis of austinol and dehydroaustinol, two fungal meroterpenoids. The first step of the pathway is the synthesis of 3,5-dimethylorsellinic acid by the polyketide synthase ausA. 3,5-dimethylorsellinic acid is then prenylated by the polyprenyl transferase ausN. Further epoxidation by the FAD-dependent monooxygenase ausM and cyclization by the probable terpene cyclase ausL lead to the formation of protoaustinoid A. Protoaustinoid A is then oxidized to spiro-lactone preaustinoid A3 by the combined action of the FAD-binding monooxygenases ausB and ausC, and the dioxygenase ausE. Acid-catalyzed keto-rearrangement and ring contraction of the tetraketide portion of preaustinoid A3 by ausJ lead to the formation of preaustinoid A4. The aldo-keto reductase ausK, with the help of ausH, is involved in the next step by transforming preaustinoid A4 into isoaustinone which is in turn hydroxylated by the P450 monooxygenase ausI to form austinolide. Finally, the cytochrome P450 monooxygenase ausG modifies austinolide to austinol. Austinol can be further modified to dehydroaustinol which forms a diffusible complex with diorcinol that initiates conidiation. Due to genetic rearrangements of the clusters and the subsequent loss of some enzymes, the end products of the Emericella nidulans austinoid biosynthesis clusters are austinol and dehydroaustinol, even if additional enzymes, such as the O-acetyltransferase ausQ and the cytochrome P450 monooxygenase ausR are still functional. This is Short chain dehydrogenase ausX from Emericella nidulans (strain FGSC A4 / ATCC 38163 / CBS 112.46 / NRRL 194 / M139) (Aspergillus nidulans).